We begin with the raw amino-acid sequence, 209 residues long: Ribosomal RNA large subunit methyltransferase E (209 aa).

S-adenosyl-L-methionine-binding residues include G63, W65, D83, D99, and D124. K164 (proton acceptor) is an active-site residue. In terms of domain architecture, TRAM spans 191 to 209 (EASRGRSREVYIVATGYKG).

The protein belongs to the class I-like SAM-binding methyltransferase superfamily. RNA methyltransferase RlmE family.

The protein resides in the cytoplasm. The catalysed reaction is uridine(2552) in 23S rRNA + S-adenosyl-L-methionine = 2'-O-methyluridine(2552) in 23S rRNA + S-adenosyl-L-homocysteine + H(+). Its function is as follows. Specifically methylates the uridine in position 2552 of 23S rRNA at the 2'-O position of the ribose in the fully assembled 50S ribosomal subunit. The protein is Ribosomal RNA large subunit methyltransferase E of Haemophilus influenzae (strain 86-028NP).